Consider the following 208-residue polypeptide: MNYPNGKPFNRNKTKVGRTNDHKSSKIKYGGRGMTLEKEIELSNDYYLSIGKAVIHKKPTPVQIVDVSYPKRSKAVIKEAYFRTPSTTDYNGIYNGYYIDFEAKETKNKTSFPLQNIHEHQVMHMKAVHEQKGIAFLLIRFKTLDEVYLLPYVPFEYFWKRYQQEIKKSITVEEIRKNGYHIPYQYQPRLNYLKAVNKLILDESEDRV.

The disordered stretch occupies residues 1-25; the sequence is MNYPNGKPFNRNKTKVGRTNDHKSS. Mg(2+)-binding residues include Thr-87, Asp-89, Glu-102, and Gln-121.

Belongs to the RecU family. The cofactor is Mg(2+).

It localises to the cytoplasm. The catalysed reaction is Endonucleolytic cleavage at a junction such as a reciprocal single-stranded crossover between two homologous DNA duplexes (Holliday junction).. Its function is as follows. Endonuclease that resolves Holliday junction intermediates in genetic recombination. Cleaves mobile four-strand junctions by introducing symmetrical nicks in paired strands. Promotes annealing of linear ssDNA with homologous dsDNA. Required for DNA repair, homologous recombination and chromosome segregation. The protein is Holliday junction resolvase RecU of Staphylococcus carnosus (strain TM300).